The primary structure comprises 301 residues: tRNA pseudouridine synthase B (301 aa).

Residue D47 is the Nucleophile of the active site.

Belongs to the pseudouridine synthase TruB family. Type 1 subfamily.

It catalyses the reaction uridine(55) in tRNA = pseudouridine(55) in tRNA. Responsible for synthesis of pseudouridine from uracil-55 in the psi GC loop of transfer RNAs. This is tRNA pseudouridine synthase B from Cereibacter sphaeroides (strain ATCC 17025 / ATH 2.4.3) (Rhodobacter sphaeroides).